Here is a 274-residue protein sequence, read N- to C-terminus: Dermonecrotic toxin LcsSicTox-betaIC1 (274 aa).

His-5 is a catalytic residue. Glu-25 and Asp-27 together coordinate Mg(2+). Catalysis depends on His-41, which acts as the Nucleophile. 2 cysteine pairs are disulfide-bonded: Cys-45-Cys-51 and Cys-47-Cys-190. The N-linked (GlcNAc...) asparagine glycan is linked to Asn-66. A Mg(2+)-binding site is contributed by Asp-85.

Belongs to the arthropod phospholipase D family. Class II subfamily. The cofactor is Mg(2+). Expressed by the venom gland.

It is found in the secreted. It carries out the reaction an N-(acyl)-sphingosylphosphocholine = an N-(acyl)-sphingosyl-1,3-cyclic phosphate + choline. It catalyses the reaction an N-(acyl)-sphingosylphosphoethanolamine = an N-(acyl)-sphingosyl-1,3-cyclic phosphate + ethanolamine. The enzyme catalyses a 1-acyl-sn-glycero-3-phosphocholine = a 1-acyl-sn-glycero-2,3-cyclic phosphate + choline. The catalysed reaction is a 1-acyl-sn-glycero-3-phosphoethanolamine = a 1-acyl-sn-glycero-2,3-cyclic phosphate + ethanolamine. Dermonecrotic toxins cleave the phosphodiester linkage between the phosphate and headgroup of certain phospholipids (sphingolipid and lysolipid substrates), forming an alcohol (often choline) and a cyclic phosphate. This toxin acts on sphingomyelin (SM). It may also act on ceramide phosphoethanolamine (CPE), lysophosphatidylcholine (LPC) and lysophosphatidylethanolamine (LPE), but not on lysophosphatidylserine (LPS), and lysophosphatidylglycerol (LPG). It acts by transphosphatidylation, releasing exclusively cyclic phosphate products as second products. Induces dermonecrosis, hemolysis, increased vascular permeability, edema, inflammatory response, and platelet aggregation. This is Dermonecrotic toxin LcsSicTox-betaIC1 from Loxosceles cf. spinulosa (strain GJB-2008) (Recluse spider).